Reading from the N-terminus, the 177-residue chain is Large ribosomal subunit protein uL6 (177 aa).

The protein belongs to the universal ribosomal protein uL6 family. As to quaternary structure, part of the 50S ribosomal subunit.

Its function is as follows. This protein binds to the 23S rRNA, and is important in its secondary structure. It is located near the subunit interface in the base of the L7/L12 stalk, and near the tRNA binding site of the peptidyltransferase center. The polypeptide is Large ribosomal subunit protein uL6 (Azoarcus sp. (strain BH72)).